The sequence spans 192 residues: Cell division protein SepF (192 aa).

The segment at 15 to 70 (GDPLEYEEDGEEYEQVYREENKREEARRATAGTAAAATPTAAAQASDAAPMGSGPA) is disordered. Residues 18–28 (LEYEEDGEEYE) are compositionally biased toward acidic residues. The segment covering 29-42 (QVYREENKREEARR) has biased composition (basic and acidic residues). Over residues 43 to 63 (ATAGTAAAATPTAAAQASDAA) the composition is skewed to low complexity.

This sequence belongs to the SepF family. In terms of assembly, homodimer. Interacts with FtsZ.

Its subcellular location is the cytoplasm. Cell division protein that is part of the divisome complex and is recruited early to the Z-ring. Probably stimulates Z-ring formation, perhaps through the cross-linking of FtsZ protofilaments. Its function overlaps with FtsA. This is Cell division protein SepF from Gloeobacter violaceus (strain ATCC 29082 / PCC 7421).